The chain runs to 427 residues: MKLLKRLVSVFAIVLAVGSNAFAGDEVRIVIDEGVDGARPIAVVPFVGSAPEDISKIVADDLRNSGKFNPIAVSQMPQRPTSAAEVNPEAWSNIGIDAIVIGQVVPSGNGYSITYQLIDTVGASGTPGTVLMQNSYTVTNKWLRYGAHTVSDEVFEKLTAIRGAFRTRIAYVVQKNGGSQPYEVRVADYDGYNQFIVNRSAQPIMSPAWSPDGQRLAYVSFENKKSQLVVQDLNFGARKVVASFQGHNGAPAFSPDGSRLAFASSRDGVLNIYVMGANGGTPTQLTSGAGNNTEPAWSPDGNSILFTSDRSGSPQVYRMDASGGSATVVGGRGSAQISADGKTLVMINGNNNVVKQDLTTGVSEVLSTSFLGESPSLSPNGIMIIYSSTQGLGKVLQLVSADGRFKASLPGSDGQVKFPAWSPYLTK.

Positions 1–23 (MKLLKRLVSVFAIVLAVGSNAFA) are cleaved as a signal peptide.

This sequence belongs to the TolB family. In terms of assembly, the Tol-Pal system is composed of five core proteins: the inner membrane proteins TolA, TolQ and TolR, the periplasmic protein TolB and the outer membrane protein Pal. They form a network linking the inner and outer membranes and the peptidoglycan layer.

The protein resides in the periplasm. Part of the Tol-Pal system, which plays a role in outer membrane invagination during cell division and is important for maintaining outer membrane integrity. This chain is Tol-Pal system protein TolB, found in Haemophilus influenzae (strain PittEE).